The sequence spans 398 residues: 1-deoxy-D-xylulose 5-phosphate reductoisomerase (398 aa).

5 residues coordinate NADPH: Thr11, Gly12, Ser13, Ile14, and Asn125. Lys126 lines the 1-deoxy-D-xylulose 5-phosphate pocket. NADPH is bound at residue Glu127. Asp151 contributes to the Mn(2+) binding site. The 1-deoxy-D-xylulose 5-phosphate site is built by Ser152, Glu153, Ser186, and His209. Glu153 is a Mn(2+) binding site. Gly215 is an NADPH binding site. 1-deoxy-D-xylulose 5-phosphate contacts are provided by Ser222, Asn227, Lys228, and Glu231. A Mn(2+)-binding site is contributed by Glu231.

It belongs to the DXR family. Mg(2+) is required as a cofactor. The cofactor is Mn(2+).

The enzyme catalyses 2-C-methyl-D-erythritol 4-phosphate + NADP(+) = 1-deoxy-D-xylulose 5-phosphate + NADPH + H(+). It functions in the pathway isoprenoid biosynthesis; isopentenyl diphosphate biosynthesis via DXP pathway; isopentenyl diphosphate from 1-deoxy-D-xylulose 5-phosphate: step 1/6. Functionally, catalyzes the NADPH-dependent rearrangement and reduction of 1-deoxy-D-xylulose-5-phosphate (DXP) to 2-C-methyl-D-erythritol 4-phosphate (MEP). This Acinetobacter baumannii (strain AB307-0294) protein is 1-deoxy-D-xylulose 5-phosphate reductoisomerase.